A 945-amino-acid polypeptide reads, in one-letter code: MLDKYSPAEIESKHYQNWEEQGYFQPDMDLTKPSFSIQLPPPNVTGTLHMGHAFNQTIMDGLTRYYRMKGCNTAWIPGTDHAGIATQIVVERQLAAQNVSRHDLGREKFLEKVWEWKEVSGGTITQQMRRVGCSADWTREYFTMDDVRAETVTEVFVRLYEQGLIYRGKRLVNWDPVLGTAVSDLEVESVEEQGSMWHIRYPLADNPAEAVIVATTRPETLLGDVAVAVNPEDERYTHLIGKELILPLTGRTIPVIADEYVEKDFGTGCVKITPAHDFNDYEVGKRHDTRLVNVFDLEAKVLANAEVFNFKGEAQPSFALPEKYAGLDRFAARKQMVADLQEQGFLVEIKAHTLMTPKGDRTGSVIEPMLTSQWFVAMSATPNGGEPDSEFKGLSLADKAKKAVDSGAVRFIPENWVNTYNQWMNNIQDWCISRQLWWGHQIPAWYDNEGNVYVARNQEEAEKQAGKTGLTREEDVLDTWFSSALVPFSTLGWPSETDELKAFLPSNVLVTGYEIIFFWVARMIMMTTHFTGKVPFKDVYIHGIVRDHEGKKMSKSEGNVIDPVDLIDGIDLEKLLVKRTTGLRKPETAPKVEEASRKLFPEGIPSMGADALRFTMASYASLGRSVNFDFKRAEGYRNFCNKIWNATNFVLMNTENQDCGYGATATEPRGYSFPDMWIVDRLNQTIEQVTQAYETYRFDLAAETLYSFMWNDYCDWYLELAKVQLQTGCASRQRATRHTLLRVLEAALRLLHPIIPFITEELWQTVAPMCDAKTADSIMLARFPEADSGEIVQTAFEQMTVLQDLIGAVRNLRGEMGIQPNVKAPLFVESTDDLADYLKYLPMMTRLTEAQQVATLPESEDAPVAVCNGARLMLKVEIDKATETARLSKEAEKLQKALDKLNAKLSKPGYTEKAPAHLVEKDKADLAELEDKMAKVQTQLSKLKD.

The 'HIGH' region signature appears at 42–52 (PNVTGTLHMGH). The 'KMSKS' region signature appears at 552-556 (KMSKS). Residue K555 participates in ATP binding. Positions 879-945 (DKATETARLS…VQTQLSKLKD (67 aa)) form a coiled coil.

Belongs to the class-I aminoacyl-tRNA synthetase family. ValS type 1 subfamily. In terms of assembly, monomer.

The protein resides in the cytoplasm. It catalyses the reaction tRNA(Val) + L-valine + ATP = L-valyl-tRNA(Val) + AMP + diphosphate. Functionally, catalyzes the attachment of valine to tRNA(Val). As ValRS can inadvertently accommodate and process structurally similar amino acids such as threonine, to avoid such errors, it has a 'posttransfer' editing activity that hydrolyzes mischarged Thr-tRNA(Val) in a tRNA-dependent manner. The sequence is that of Valine--tRNA ligase from Neisseria meningitidis serogroup A / serotype 4A (strain DSM 15465 / Z2491).